Reading from the N-terminus, the 151-residue chain is Methylglyoxal synthase (151 aa).

The 146-residue stretch at 6–151 (RVMPAHKHIA…DYDAYLAERV (146 aa)) folds into the MGS-like domain. Substrate contacts are provided by residues His-19, Lys-23, 45-48 (TGTT), and 65-66 (SG). Residue Asp-71 is the Proton donor/acceptor of the active site. His-98 is a substrate binding site.

This sequence belongs to the methylglyoxal synthase family.

The catalysed reaction is dihydroxyacetone phosphate = methylglyoxal + phosphate. Functionally, catalyzes the formation of methylglyoxal from dihydroxyacetone phosphate. This Aliivibrio fischeri (strain MJ11) (Vibrio fischeri) protein is Methylglyoxal synthase.